The chain runs to 85 residues: Beta-toxin BmKAs1 (85 aa).

An N-terminal signal peptide occupies residues 1 to 19; that stretch reads MKIIIFLIVCSFVLIGVKA. The LCN-type CS-alpha/beta domain occupies 20-82; it reads DNGYLLNKYT…LWAYETNKCN (63 aa). Disulfide bonds link Cys31-Cys81, Cys35-Cys56, Cys42-Cys63, and Cys46-Cys65.

This sequence belongs to the long (4 C-C) scorpion toxin superfamily. Sodium channel inhibitor family. A possible sulfoxide Met-85 on BmP09 could explain the difference of function between BmK AS-1 and BmP09. Expressed by the venom gland.

It is found in the secreted. Beta toxins bind voltage-independently at site-4 of sodium channels (Nav) and shift the voltage of activation toward more negative potentials thereby affecting sodium channel activation and promoting spontaneous and repetitive firing. BmKAs1 also significantly stimulates the binding of [3H]-ryanodine to ryanodine receptors on the sarcoplasmic reticulum of the skeletal muscle. It also displays antinociceptive effect in rat models. Functionally, toxin BmP09 (which may be post-translationally modified) specifically and reversibly blocks large conductance calcium-dependent and voltage-dependent potassium channels (BK) but has no effect on sodium channels. The sequence is that of Beta-toxin BmKAs1 from Olivierus martensii (Manchurian scorpion).